The chain runs to 327 residues: Cell division protein ZipA (327 aa).

At 1 to 5 (MQDLR) the chain is on the periplasmic side. Residues 6-26 (LILIVVGAIAIIALLLHGLWT) traverse the membrane as a helical segment. The Cytoplasmic segment spans residues 27–327 (SRKERSSLFR…REVLDANTIA (301 aa)). A compositionally biased stretch (basic and acidic residues) spans 60–71 (GEVRVRTSHPQE). Positions 60–182 (GEVRVRTSHP…EPVAPAPEAK (123 aa)) are disordered. Composition is skewed to polar residues over residues 94–103 (KSAQVKTASR) and 163–173 (APQQHVESQQE).

Belongs to the ZipA family. Interacts with FtsZ via their C-terminal domains.

The protein localises to the cell inner membrane. Its function is as follows. Essential cell division protein that stabilizes the FtsZ protofilaments by cross-linking them and that serves as a cytoplasmic membrane anchor for the Z ring. Also required for the recruitment to the septal ring of downstream cell division proteins. The polypeptide is Cell division protein ZipA (Yersinia pseudotuberculosis serotype O:1b (strain IP 31758)).